Here is a 77-residue protein sequence, read N- to C-terminus: uncharacterized protein (77 aa).

Its function is as follows. Putative sugar-binding regulatory protein for the alpha-amylase gene. This is an uncharacterized protein from Streptomyces violaceus (Streptomyces venezuelae).